A 340-amino-acid chain; its full sequence is Glycerol-3-phosphate dehydrogenase [NAD(P)+] (340 aa).

4 residues coordinate NADPH: Ser15, Tyr16, His36, and Lys110. The sn-glycerol 3-phosphate site is built by Lys110, Gly139, and Thr141. Residue Ala143 participates in NADPH binding. Residues Lys196, Asp249, Ser259, Arg260, and Asn261 each contribute to the sn-glycerol 3-phosphate site. Lys196 functions as the Proton acceptor in the catalytic mechanism. An NADPH-binding site is contributed by Arg260. NADPH contacts are provided by Val284 and Glu286.

It belongs to the NAD-dependent glycerol-3-phosphate dehydrogenase family.

It localises to the cytoplasm. The catalysed reaction is sn-glycerol 3-phosphate + NAD(+) = dihydroxyacetone phosphate + NADH + H(+). The enzyme catalyses sn-glycerol 3-phosphate + NADP(+) = dihydroxyacetone phosphate + NADPH + H(+). Its pathway is membrane lipid metabolism; glycerophospholipid metabolism. Functionally, catalyzes the reduction of the glycolytic intermediate dihydroxyacetone phosphate (DHAP) to sn-glycerol 3-phosphate (G3P), the key precursor for phospholipid synthesis. The protein is Glycerol-3-phosphate dehydrogenase [NAD(P)+] of Serratia marcescens.